The following is a 372-amino-acid chain: Putative actin-27 (372 aa).

This sequence belongs to the actin family.

Its subcellular location is the cytoplasm. The protein localises to the cytoskeleton. It carries out the reaction ATP + H2O = ADP + phosphate + H(+). Its function is as follows. Actins are highly conserved proteins that are involved in various types of cell motility and are ubiquitously expressed in all eukaryotic cells. Multiple isoforms are involved in various cellular functions such as cytoskeleton structure, cell mobility, chromosome movement and muscle contraction. The sequence is that of Putative actin-27 (act27) from Dictyostelium discoideum (Social amoeba).